Here is a 73-residue protein sequence, read N- to C-terminus: UPF0435 protein lmo1707 (73 aa).

The protein belongs to the UPF0435 family.

The polypeptide is UPF0435 protein lmo1707 (Listeria monocytogenes serovar 1/2a (strain ATCC BAA-679 / EGD-e)).